The primary structure comprises 388 residues: Succinate--CoA ligase [ADP-forming] subunit beta (388 aa).

The ATP-grasp domain maps to Lys-9–Glu-244. Residues Lys-46, Gly-53 to Gly-55, Glu-99, Val-102, and Glu-107 contribute to the ATP site. Mg(2+)-binding residues include Asn-199 and Asp-213. Substrate-binding positions include Asn-264 and Gly-321–Leu-323.

It belongs to the succinate/malate CoA ligase beta subunit family. As to quaternary structure, heterotetramer of two alpha and two beta subunits. Requires Mg(2+) as cofactor.

The enzyme catalyses succinate + ATP + CoA = succinyl-CoA + ADP + phosphate. It catalyses the reaction GTP + succinate + CoA = succinyl-CoA + GDP + phosphate. The protein operates within carbohydrate metabolism; tricarboxylic acid cycle; succinate from succinyl-CoA (ligase route): step 1/1. Its function is as follows. Succinyl-CoA synthetase functions in the citric acid cycle (TCA), coupling the hydrolysis of succinyl-CoA to the synthesis of either ATP or GTP and thus represents the only step of substrate-level phosphorylation in the TCA. The beta subunit provides nucleotide specificity of the enzyme and binds the substrate succinate, while the binding sites for coenzyme A and phosphate are found in the alpha subunit. In Desulfosudis oleivorans (strain DSM 6200 / JCM 39069 / Hxd3) (Desulfococcus oleovorans), this protein is Succinate--CoA ligase [ADP-forming] subunit beta.